The primary structure comprises 104 residues: Iron-sulfur cluster assembly protein CyaY (104 aa).

It belongs to the frataxin family.

Involved in iron-sulfur (Fe-S) cluster assembly. May act as a regulator of Fe-S biogenesis. The chain is Iron-sulfur cluster assembly protein CyaY from Aeromonas hydrophila subsp. hydrophila (strain ATCC 7966 / DSM 30187 / BCRC 13018 / CCUG 14551 / JCM 1027 / KCTC 2358 / NCIMB 9240 / NCTC 8049).